A 77-amino-acid chain; its full sequence is Acyl carrier protein (77 aa).

One can recognise a Carrier domain in the interval Ser2–Gln77. Ser37 carries the post-translational modification O-(pantetheine 4'-phosphoryl)serine.

Belongs to the acyl carrier protein (ACP) family. In terms of processing, 4'-phosphopantetheine is transferred from CoA to a specific serine of apo-ACP by AcpS. This modification is essential for activity because fatty acids are bound in thioester linkage to the sulfhydryl of the prosthetic group.

Its subcellular location is the cytoplasm. Its pathway is lipid metabolism; fatty acid biosynthesis. Carrier of the growing fatty acid chain in fatty acid biosynthesis. This is Acyl carrier protein from Shewanella oneidensis (strain ATCC 700550 / JCM 31522 / CIP 106686 / LMG 19005 / NCIMB 14063 / MR-1).